The chain runs to 380 residues: Cytochrome b (380 aa).

Helical transmembrane passes span 34 to 54 (FGSL…LLAM), 78 to 99 (WLIR…YLHI), 114 to 134 (WNTG…GYVL), and 179 to 199 (FFAL…IHLT). The heme b site is built by His-84 and His-98. Residues His-183 and His-197 each coordinate heme b. Residue His-202 coordinates a ubiquinone. The next 4 membrane-spanning stretches (helical) occupy residues 227–247 (LKDI…ALFS), 289–309 (LGGV…PLLH), 321–341 (LSQL…WIGS), and 348–368 (FIII…VLFP).

The protein belongs to the cytochrome b family. The cytochrome bc1 complex contains 11 subunits: 3 respiratory subunits (MT-CYB, CYC1 and UQCRFS1), 2 core proteins (UQCRC1 and UQCRC2) and 6 low-molecular weight proteins (UQCRH/QCR6, UQCRB/QCR7, UQCRQ/QCR8, UQCR10/QCR9, UQCR11/QCR10 and a cleavage product of UQCRFS1). This cytochrome bc1 complex then forms a dimer. It depends on heme b as a cofactor.

The protein resides in the mitochondrion inner membrane. Its function is as follows. Component of the ubiquinol-cytochrome c reductase complex (complex III or cytochrome b-c1 complex) that is part of the mitochondrial respiratory chain. The b-c1 complex mediates electron transfer from ubiquinol to cytochrome c. Contributes to the generation of a proton gradient across the mitochondrial membrane that is then used for ATP synthesis. The polypeptide is Cytochrome b (MT-CYB) (Thalassarche impavida (Albatross)).